The following is a 212-amino-acid chain: Ependymin (212 aa).

The N-terminal stretch at M1–A20 is a signal peptide. N-linked (GlcNAc...) asparagine glycosylation is found at N69, N92, and N112.

Belongs to the ependymin family. Forms disulfide-linked dimers. Binds calcium through the terminal sialic acids. As to expression, EPDs are synthesized in the meninx and secreted in the cerebrospinal fluid.

The protein localises to the secreted. Functionally, may play a role in neural plasticity. May be involved during axon regeneration. The sequence is that of Ependymin (epd) from Clupea harengus (Atlantic herring).